The primary structure comprises 289 residues: 3-methyl-2-oxobutanoate hydroxymethyltransferase (289 aa).

Positions 1–10 (MSDSKSSAST) are enriched in low complexity. The segment at 1 to 33 (MSDSKSSASTSEDRLYGSAPSHDVPKRKTRTHH) is disordered. Mg(2+) is bound by residues Asp70 and Asp109. 3-methyl-2-oxobutanoate is bound by residues 70–71 (DS), Asp109, and Lys139. Position 141 (Glu141) interacts with Mg(2+). Residue Glu207 is the Proton acceptor of the active site.

Belongs to the PanB family. In terms of assembly, homodecamer; pentamer of dimers. Requires Mg(2+) as cofactor.

It is found in the cytoplasm. The enzyme catalyses 3-methyl-2-oxobutanoate + (6R)-5,10-methylene-5,6,7,8-tetrahydrofolate + H2O = 2-dehydropantoate + (6S)-5,6,7,8-tetrahydrofolate. The protein operates within cofactor biosynthesis; (R)-pantothenate biosynthesis; (R)-pantoate from 3-methyl-2-oxobutanoate: step 1/2. In terms of biological role, catalyzes the reversible reaction in which hydroxymethyl group from 5,10-methylenetetrahydrofolate is transferred onto alpha-ketoisovalerate to form ketopantoate. This is 3-methyl-2-oxobutanoate hydroxymethyltransferase from Rhodococcus jostii (strain RHA1).